Here is a 223-residue protein sequence, read N- to C-terminus: MTSDASQDGPDAVAGSGDRAVAAAAERAKLTAARNIPTFDDLPLPADTANLRHGANLHDALLALLPLVGVWRGEGEGRGPHGDYRFGQQIVVSHDGGDYLNWEARSWRLDEDGQYEEPGLRETGFWRFVSDPEDDPSESQAIELLLAHSAGYVELFYGRPLTQSSWELVTDALARSRSGVLVGGAKRLYGIIEGGDLAYVEERVDADGGLVPHLSARLSRYAG.

A GXWXGXG motif is present at residues 69–75; it reads GVWRGEG. Residues K186 and H213 each coordinate heme b.

This sequence belongs to the nitrobindin family. In terms of assembly, homodimer. Heme b is required as a cofactor.

It carries out the reaction peroxynitrite = nitrate. Its pathway is nitrogen metabolism. Functionally, heme-binding protein able to scavenge peroxynitrite and to protect free L-tyrosine against peroxynitrite-mediated nitration, by acting as a peroxynitrite isomerase that converts peroxynitrite to nitrate. Therefore, this protein likely plays a role in peroxynitrite sensing and in the detoxification of reactive nitrogen and oxygen species (RNS and ROS, respectively). Is able to bind nitric oxide (NO) in vitro, but may act as a sensor of peroxynitrite levels in vivo. This chain is Peroxynitrite isomerase 1, found in Mycobacterium marinum (strain ATCC BAA-535 / M).